A 966-amino-acid polypeptide reads, in one-letter code: MVNSRRVQPQPPGDAGRSPAPRASGPGRLVAGGAGLAVPGGLGEQRGLEIEMERIRQAAARDPPAGASASPSPPLSSCSRQAWSRDNPGFEAEEDDDDDEVEGEEGGMVVEMDVEWRPGSRRSASSSAVSSVGARGRGLGSYRGAAHLSGRRRRLEDQGAQCPSPAGGGDPLHRHLPLEGQPPRVAWAERLVRGLRGLWGTRLMEESNANREKYLKSVLRELVTYLFFLVVLCILTYGMMSSNVYYYTRTLSQLFIDTPVSKTEKTNFKTLSSMEDFWKFTEGSFLDGLYWKAQTSNHTQADNRSFIFYENLLLGVPRLRQLRVRNGSCSIPQDLRDEIKECYDVYSVSSEDRAPFGPRNGTAWMYTSEKELNGSSHWGIIASYSGAGYYLDLSRTREETAAQLAGLRRNFWLDRGTRAAFIDFSVYNANINLFCVVRLLAEFPATGGVVPSWQFQPVKLIRYVTAFDFFLAACEIIFCFFIIYYVVEEILEIRIHRLSYFRSFWNCLDVVIVVLSVVAMVINIYRMSNAEGLLQFLEDQNSFPNFEHVAYWQIQFNNISAVMVFLVWIKLFKFINFNRTMSQLSTTMSRCAKDLFGFTIMFSIIFLAYAQLAYLVFGTQVDDFSTFQECIFTQFRIILGDINFAEIEEANRVLGPLYFTTFVFFMFFILLNMFLAIINDSYSEVKSDLAQQKAEMELSDLIRKGCQKALVKLKLKRNTVDAISESLRQGGGKLNFDELRQDLKGKGHTDAEIEAIFTKYDQDGDQELTEREHQQMRDDLEKEREDLDLEHSSLPRPMSSRSFPRSLDDSEEEDDEDSGHSSRRRGSISSGVSYEEFQVLVRRVDRMEHSIGSIVSKIDAVIVKLEIMERAKLKRREVLGRLLDGVAEDARLGRDSEIHREQMERLVREELERWESDDAASQTGHGVSTQVGLGGQPHPRNPRPPSSQSAEGLEGGGGNGSANVHA.

Residues 1–106 are disordered; sequence MVNSRRVQPQ…DDDEVEGEEG (106 aa). Over 1 to 217 the chain is Cytoplasmic; that stretch reads MVNSRRVQPQ…NANREKYLKS (217 aa). Residues 30–44 are compositionally biased toward gly residues; it reads VAGGAGLAVPGGLGE. Residues 46 to 56 show a composition bias toward basic and acidic residues; it reads RGLEIEMERIR. Residues 58 to 79 show a composition bias toward low complexity; that stretch reads AAARDPPAGASASPSPPLSSCS. 2 positions are modified to phosphoserine: serine 72 and serine 76. Residues 91-105 are compositionally biased toward acidic residues; that stretch reads EAEEDDDDDEVEGEE. Arginine 135 is subject to Omega-N-methylarginine. A disordered region spans residues 147-179; sequence HLSGRRRRLEDQGAQCPSPAGGGDPLHRHLPLE. A helical membrane pass occupies residues 218–239; the sequence is VLRELVTYLFFLVVLCILTYGM. Topologically, residues 240-466 are extracellular; sequence MSSNVYYYTR…PVKLIRYVTA (227 aa). Asparagine 297, asparagine 303, and asparagine 326 each carry an N-linked (GlcNAc...) asparagine glycan. A disulfide bond links cysteine 329 and cysteine 342. N-linked (GlcNAc...) asparagine glycans are attached at residues asparagine 360 and asparagine 373. The helical transmembrane segment at 467-487 threads the bilayer; it reads FDFFLAACEIIFCFFIIYYVV. Residues 488-503 are Cytoplasmic-facing; it reads EEILEIRIHRLSYFRS. A helical membrane pass occupies residues 504-524; the sequence is FWNCLDVVIVVLSVVAMVINI. Over 525-550 the chain is Extracellular; the sequence is YRMSNAEGLLQFLEDQNSFPNFEHVA. A helical transmembrane segment spans residues 551–571; that stretch reads YWQIQFNNISAVMVFLVWIKL. Cholesterol is bound at residue glutamine 555. At 572–595 the chain is on the cytoplasmic side; it reads FKFINFNRTMSQLSTTMSRCAKDL. A helical transmembrane segment spans residues 596–617; that stretch reads FGFTIMFSIIFLAYAQLAYLVF. The Extracellular portion of the chain corresponds to 618–629; sequence GTQVDDFSTFQE. An intramembrane region (pore-forming) is located at residues 630-644; that stretch reads CIFTQFRIILGDINF. Leucine 639 contributes to the Ca(2+) binding site. The short motif at 639–641 is the Selectivity filter element; it reads LGD. Residues 645–652 lie on the Extracellular side of the membrane; sequence AEIEEANR. The helical transmembrane segment at 653–673 threads the bilayer; sequence VLGPLYFTTFVFFMFFILLNM. At 674-966 the chain is on the cytoplasmic side; that stretch reads FLAIINDSYS…GGNGSANVHA (293 aa). Positions 748 to 783 constitute an EF-hand domain; sequence HTDAEIEAIFTKYDQDGDQELTEREHQQMRDDLEKE. Positions 761, 763, 765, 767, and 772 each coordinate Ca(2+). The segment at 764–828 is disordered; it reads GDQELTEREH…GHSSRRRGSI (65 aa). A compositionally biased stretch (basic and acidic residues) spans 768–793; it reads LTEREHQQMRDDLEKEREDLDLEHSS. Residues 794 to 805 are compositionally biased toward low complexity; that stretch reads LPRPMSSRSFPR. 4 positions are modified to phosphoserine: serine 799, serine 806, serine 810, and serine 827. The linker stretch occupies residues 801–820; sequence RSFPRSLDDSEEEDDEDSGH. The tract at residues 808 to 819 is important for interaction with PACS1 and PACS2; it reads DDSEEEDDEDSG. A coiled-coil region spans residues 831 to 870; that stretch reads GVSYEEFQVLVRRVDRMEHSIGSIVSKIDAVIVKLEIMER. The tract at residues 914-966 is disordered; sequence WESDDAASQTGHGVSTQVGLGGQPHPRNPRPPSSQSAEGLEGGGGNGSANVHA. Over residues 919–931 the composition is skewed to polar residues; sequence AASQTGHGVSTQV.

This sequence belongs to the polycystin family. Homotetramer. Component of the heterotetrameric polycystin channel complex with PKD1; the tetramer contains one PKD1 chain and three PKD2 chains. Interaction with PKD1 is required for ciliary localization. Isoform 1 interacts with PKD1 while isoform 3 does not. Interacts with PKD1L1. Interacts with CD2AP. Interacts with HAX1. Interacts with NEK8. Part of a complex containing AKAP5, ADCY5, ADCY6 and PDE4C. Interacts (via C-terminus) with TRPV4 (via C-terminus). Interacts (via C-terminal acidic region) with PACS1 and PACS2; these interactions retain the protein in the endoplasmic reticulum and prevent trafficking to the cell membrane. Interacts with TMEM33; enhancing its opening at the ER membrane. Interacts with TMEM120A; TMEM120A inhibits PKD2 channel activity through the physical association of PKD2 with TMEM120A. Interacts (via N-terminus) with RYR2; regulates RYR2 channel activity. In terms of processing, N-glycosylated. The four subunits in a tetramer probably differ in the extent of glycosylation; simultaneous glycosylation of all experimentally validated sites would probably create steric hindrance. Post-translationally, sumoylated by SUMO1; sumoylation regulates PKD2 membrane recycling and is necessary for intravascular pressure-induced arterial contractility. Phosphorylated. Phosphorylation is important for protein function; a mutant that lacks the N-terminal phosphorylation sites cannot complement a zebrafish pkd2-deficient mutant. PKD-mediated phosphorylation at the C-terminus regulates its function in the release of Ca(2+) stores from the endoplasmic reticulum. Phosphorylation at Ser-810 regulates PKD2 trafficking. Phosphorylation at Ser-72 is required for PKD2 trafficking to or retention at the lateral plasma membrane. Phosphorylation at Ser-799, Ser-810 and Ser-827 regulates PKD2 channel activity. In terms of tissue distribution, detected in kidney epithelium (at protein level). Highly expressed on basolateral membranes in distal convoluted tubules and medullary thick ascending limbs of Henle. Detected at much lower levels in cortical and medullary collecting tubules, and not detected in the glomerular tuft, in thin limbs of Henle, interstitium and blood vessels (at protein level). Expressed in mesenchymally derived structures in the developing embryo at day 12.5. Isoform 1 is predominantly expressed in kidney at all developmental stages with high levels also detected in lung. Isoform 3 shows highest expression in brain with lower expression in kidney and lung, low levels in thymus and is hardly detectable in liver.

It localises to the cell projection. Its subcellular location is the cilium membrane. The protein localises to the cell membrane. The protein resides in the basolateral cell membrane. It is found in the cytoplasmic vesicle membrane. It localises to the endoplasmic reticulum membrane. Its subcellular location is the golgi apparatus. The protein localises to the vesicle. The protein resides in the secreted. It is found in the extracellular exosome. The catalysed reaction is K(+)(in) = K(+)(out). It carries out the reaction Na(+)(in) = Na(+)(out). It catalyses the reaction Ca(2+)(in) = Ca(2+)(out). Channel activity is regulated by phosphorylation. The channel is activated by increased cytoplasmic Ca(2+) (in the uM range) and by membrane depolarization. TMEM120A inhibits the channel activity of PKD2, and mediates mechanosensitivity of the PKD2-TMEM120A channel complex. At the endoplasmic reticulum membrane (ER), TMEM33 enhances its channel activity. PKD1/ PKD2 complex on the plasma membrane is activated by PKD1 N-terminus. Forms a nonselective cation channel. Can function as a homotetrameric ion channel or can form heteromer with PKD1. Displays distinct function depending on its subcellular localization and regulation by its binding partners. Functions as a cation channel, with a preference for monovalent cations over divalent cations that allows K(+), Na(+) and Ca(2+) influx, with low selectivity for Ca(2+). Involved in fluid-flow mechanosensation by the primary cilium in renal epithelium. In the endoplasmic reticulum, likely functions as a K(+) channel to facilitate Ca(2+) release. The heterotetrameric PKD1/PKD2 channel has higher Ca(2+) permeability than homomeric PKD2 channel and acts as a primarily Ca(2+)-permeable channel. PKD1 and PKD2 may function through a common signaling pathway that is necessary to maintain the normal, differentiated state of renal tubule cells. Interacts with and acts as a regulator of a number of other channels, such as TRPV4, TRPC1, IP3R, RYR2, ultimately further affecting intracellular signaling, to modulate intracellular Ca(2+) signaling. Together with TRPV4, forms mechano- and thermosensitive channels in cilium. In cardiomyocytes, PKD2 modulates Ca(2+) release from stimulated RYR2 receptors through direct association. Also involved in left-right axis specification via its role in sensing nodal flow; forms a complex with PKD1L1 in cilia to facilitate flow detection in left-right patterning. Acts as a regulator of cilium length together with PKD1. Mediates systemic blood pressure and contributes to the myogenic response in cerebral arteries though vasoconstriction. This chain is Polycystin-2, found in Mus musculus (Mouse).